Here is a 79-residue protein sequence, read N- to C-terminus: UPF0180 protein BCAH820_1484 (79 aa).

This sequence belongs to the UPF0180 family.

In Bacillus cereus (strain AH820), this protein is UPF0180 protein BCAH820_1484.